Consider the following 280-residue polypeptide: UPF0276 protein NMB2142 (280 aa).

The protein belongs to the UPF0276 family.

This Neisseria meningitidis serogroup B (strain ATCC BAA-335 / MC58) protein is UPF0276 protein NMB2142.